Consider the following 330-residue polypeptide: Ferredoxin--NADP reductase (330 aa).

The FAD site is built by glutamate 34, glutamine 42, tyrosine 47, valine 87, phenylalanine 121, aspartate 285, and serine 325.

The protein belongs to the ferredoxin--NADP reductase type 2 family. In terms of assembly, homodimer. FAD serves as cofactor.

It carries out the reaction 2 reduced [2Fe-2S]-[ferredoxin] + NADP(+) + H(+) = 2 oxidized [2Fe-2S]-[ferredoxin] + NADPH. This Limosilactobacillus fermentum (strain NBRC 3956 / LMG 18251) (Lactobacillus fermentum) protein is Ferredoxin--NADP reductase.